The following is a 138-amino-acid chain: Putative pre-16S rRNA nuclease (138 aa).

The protein belongs to the YqgF nuclease family.

The protein resides in the cytoplasm. Functionally, could be a nuclease involved in processing of the 5'-end of pre-16S rRNA. This Clostridium beijerinckii (strain ATCC 51743 / NCIMB 8052) (Clostridium acetobutylicum) protein is Putative pre-16S rRNA nuclease.